The chain runs to 427 residues: Trigger factor (427 aa).

Positions G163–P248 constitute a PPIase FKBP-type domain.

It belongs to the FKBP-type PPIase family. Tig subfamily.

It localises to the cytoplasm. The enzyme catalyses [protein]-peptidylproline (omega=180) = [protein]-peptidylproline (omega=0). In terms of biological role, involved in protein export. Acts as a chaperone by maintaining the newly synthesized protein in an open conformation. Functions as a peptidyl-prolyl cis-trans isomerase. This is Trigger factor from Streptococcus mutans serotype c (strain ATCC 700610 / UA159).